A 418-amino-acid chain; its full sequence is Serine hydroxymethyltransferase (418 aa).

Residues Leu-121 and 125-127 (GHL) contribute to the (6S)-5,6,7,8-tetrahydrofolate site. The residue at position 230 (Lys-230) is an N6-(pyridoxal phosphate)lysine. Position 356–358 (356–358 (SPF)) interacts with (6S)-5,6,7,8-tetrahydrofolate.

Belongs to the SHMT family. Homodimer. The cofactor is pyridoxal 5'-phosphate.

The protein localises to the cytoplasm. It carries out the reaction (6R)-5,10-methylene-5,6,7,8-tetrahydrofolate + glycine + H2O = (6S)-5,6,7,8-tetrahydrofolate + L-serine. It functions in the pathway one-carbon metabolism; tetrahydrofolate interconversion. Its pathway is amino-acid biosynthesis; glycine biosynthesis; glycine from L-serine: step 1/1. Its function is as follows. Catalyzes the reversible interconversion of serine and glycine with tetrahydrofolate (THF) serving as the one-carbon carrier. This reaction serves as the major source of one-carbon groups required for the biosynthesis of purines, thymidylate, methionine, and other important biomolecules. Also exhibits THF-independent aldolase activity toward beta-hydroxyamino acids, producing glycine and aldehydes, via a retro-aldol mechanism. In Pseudoalteromonas atlantica (strain T6c / ATCC BAA-1087), this protein is Serine hydroxymethyltransferase.